The following is an 88-amino-acid chain: uncharacterized protein (88 aa).

Residues 1–22 (MLKASILFITISLTLMLENSYG) form the signal peptide. Cystine bridges form between cysteine 59/cysteine 73, cysteine 66/cysteine 77, and cysteine 72/cysteine 82.

The protein localises to the secreted. This is an uncharacterized protein from Schistosoma japonicum (Blood fluke).